The chain runs to 439 residues: GTPase Der (439 aa).

2 consecutive EngA-type G domains span residues 2–168 and 181–357; these read ATVL…EEKG and IKIA…SSYT. GTP-binding positions include 8–15, 55–59, 118–121, 187–194, 234–238, and 300–303; these read GKPNVGKS, DTCGV, NKTE, GRPNVGKS, DTAGL, and NKWD. One can recognise a KH-like domain in the interval 358-439; the sequence is TKVPSSALNS…PIFLKFKKSR (82 aa).

It belongs to the TRAFAC class TrmE-Era-EngA-EngB-Septin-like GTPase superfamily. EngA (Der) GTPase family. In terms of assembly, associates with the 50S ribosomal subunit.

GTPase that plays an essential role in the late steps of ribosome biogenesis. This is GTPase Der from Thermotoga neapolitana (strain ATCC 49049 / DSM 4359 / NBRC 107923 / NS-E).